A 1793-amino-acid chain; its full sequence is Chitin synthase 5 (1793 aa).

A disordered region spans residues 1-28 (MTNPRMSMYSLASEAPGGNRGTGQQSTQ). N-linked (GlcNAc...) asparagine glycans are attached at residues asparagine 70, asparagine 164, asparagine 638, asparagine 664, and asparagine 669. Transmembrane regions (helical) follow at residues 750–770 (VWVFIVWAFTWWIPSPLLRYV) and 786–806 (LVLCFFIFLMNALIVFWIVAF). Residues 815–877 (DKAYSQKEVD…GMNLDDYFVA (63 aa)) enclose the Cytochrome b5 heme-binding domain. Residues asparagine 897, asparagine 1019, and asparagine 1023 are each glycosylated (N-linked (GlcNAc...) asparagine). A helical membrane pass occupies residues 1056 to 1076 (LLLAFSIMLCAVILLKFVSAL). An N-linked (GlcNAc...) asparagine glycan is attached at asparagine 1421. 3 helical membrane passes run 1452–1472 (LFGTIILPATCVYLGYLIYLV), 1479–1499 (FPLISIIMLAAVYGLQALIFI), and 1507–1527 (IGWMIIYILAFPIYSFVLPIY). 2 N-linked (GlcNAc...) asparagine glycosylation sites follow: asparagine 1534 and asparagine 1705. The region spanning 1735 to 1791 (GPDDGMIVEAIRTVLMEVDLDTVTKKQVRALVEQRLQSELVGERRTFMDRQIDHELA) is the DEK-C domain.

Belongs to the chitin synthase family. Class V subfamily.

The protein localises to the cell membrane. It carries out the reaction [(1-&gt;4)-N-acetyl-beta-D-glucosaminyl](n) + UDP-N-acetyl-alpha-D-glucosamine = [(1-&gt;4)-N-acetyl-beta-D-glucosaminyl](n+1) + UDP + H(+). Functionally, polymerizes chitin, a structural polymer of the cell wall and septum, by transferring the sugar moiety of UDP-GlcNAc to the non-reducing end of the growing chitin polymer. Regulates Germination and Tolerance to Hyperosmotic Stress. Plays a key role in pathogenicity. Likely contributes to post-penetration virulence. The polypeptide is Chitin synthase 5 (Verticillium dahliae (strain VdLs.17 / ATCC MYA-4575 / FGSC 10137) (Verticillium wilt)).